Reading from the N-terminus, the 339-residue chain is Vomeronasal type-1 receptor A14 (339 aa).

Topologically, residues 1 to 42 are extracellular; sequence MMGVQICQGMMSEIPFFSPPPQFSYMMNKNIRLHTDSNIRNT. Residues 43–63 traverse the membrane as a helical segment; sequence FFTDIGIGISANSLLLLFNIF. Topologically, residues 64–75 are cytoplasmic; it reads KLTRGQRSRLTD. The chain crosses the membrane as a helical span at residues 76 to 96; it reads LPIGLLSLINLLMLLMAAFIA. Over 97 to 119 the chain is Extracellular; the sequence is TDTFISWKGWDDIICKFLVYLYR. An intrachain disulfide couples Cys-111 to Cys-198. The chain crosses the membrane as a helical span at residues 120–140; the sequence is TFRGLSLCTSCLLSVLQAIIL. At 141–160 the chain is on the cytoplasmic side; that stretch reads SPRSSCLAKFKHKPPHHISC. A helical membrane pass occupies residues 161-181; that stretch reads AILSLSVLYMFIGSHLLVSII. The Extracellular portion of the chain corresponds to 182-213; it reads ATPNLTTNDFIHVTQSCSILPMSYLMQCMFST. Asn-185 carries an N-linked (GlcNAc...) asparagine glycan. Residues 214–234 form a helical membrane-spanning segment; sequence LLAIRDVFLISLMVLSTWYMV. At 235–264 the chain is on the cytoplasmic side; that stretch reads ALLCRHRKQTRHLQGTSLSPKASPEQRATR. A helical membrane pass occupies residues 265–285; it reads SILMLMSLFVLMSVFDSIVCS. The Extracellular segment spans residues 286 to 296; the sequence is SRTMYLNDPIS. A helical membrane pass occupies residues 297 to 317; sequence YSIQLFMVHIYATVSPFVFIV. Over 318–339 the chain is Cytoplasmic; it reads TEKHIVNFLRSVCEGDECLNIH.

Belongs to the G-protein coupled receptor 1 family.

It localises to the cell membrane. In terms of biological role, putative pheromone receptor implicated in the regulation of social as well as reproductive behavior. The sequence is that of Vomeronasal type-1 receptor A14 from Rattus norvegicus (Rat).